The primary structure comprises 155 residues: MAKGEGKVVAQNKKARHDYTIVDTLEAGMVLTGTEIKSVRAARINLKDGFAQVKNGEVWLSNVHIAPYEEGNIWNQEPERRRKLLLYKKQIQKLEQETKGTGMTLVPLKVYIKDGYAKLLLGLAKGKHDYDKRESIKRREQNRDIARVMKAVNQR.

This sequence belongs to the SmpB family.

It localises to the cytoplasm. In terms of biological role, required for rescue of stalled ribosomes mediated by trans-translation. Binds to transfer-messenger RNA (tmRNA), required for stable association of tmRNA with ribosomes. tmRNA and SmpB together mimic tRNA shape, replacing the anticodon stem-loop with SmpB. tmRNA is encoded by the ssrA gene; the 2 termini fold to resemble tRNA(Ala) and it encodes a 'tag peptide', a short internal open reading frame. During trans-translation Ala-aminoacylated tmRNA acts like a tRNA, entering the A-site of stalled ribosomes, displacing the stalled mRNA. The ribosome then switches to translate the ORF on the tmRNA; the nascent peptide is terminated with the 'tag peptide' encoded by the tmRNA and targeted for degradation. The ribosome is freed to recommence translation, which seems to be the essential function of trans-translation. This Streptococcus pneumoniae (strain 70585) protein is SsrA-binding protein.